The primary structure comprises 127 residues: Large ribosomal subunit protein bL17 (127 aa).

Belongs to the bacterial ribosomal protein bL17 family. As to quaternary structure, part of the 50S ribosomal subunit. Contacts protein L32.

This is Large ribosomal subunit protein bL17 from Lactiplantibacillus plantarum (strain ATCC BAA-793 / NCIMB 8826 / WCFS1) (Lactobacillus plantarum).